We begin with the raw amino-acid sequence, 260 residues long: 3'-5' ssDNA/RNA exonuclease TatD (260 aa).

A divalent metal cation is bound by residues Glu-91, His-127, and His-152.

Belongs to the metallo-dependent hydrolases superfamily. TatD-type hydrolase family. TatD subfamily. As to quaternary structure, monomer. Mg(2+) serves as cofactor.

Its subcellular location is the cytoplasm. Its function is as follows. 3'-5' exonuclease that prefers single-stranded DNA and RNA. May play a role in the H(2)O(2)-induced DNA damage repair. The chain is 3'-5' ssDNA/RNA exonuclease TatD from Citrobacter koseri (strain ATCC BAA-895 / CDC 4225-83 / SGSC4696).